The primary structure comprises 377 residues: Flap endonuclease 1 (377 aa).

Residues 1 to 105 (MGIKGLNAII…HELSKRTARR (105 aa)) are N-domain. Asp34 serves as a coordination point for Mg(2+). The DNA site is built by Arg47 and Arg71. Mg(2+) is bound at residue Asp87. Positions 99 to 119 (SKRTARREETEKKLQEATDQA) are disordered. The segment at 120–251 (EKMKQERRLV…VTALKLIKEY (132 aa)) is I-domain. Mg(2+) is bound by residues Glu156, Glu158, Asp177, and Asp179. A DNA-binding site is contributed by Glu156. DNA contacts are provided by Gly229 and Asp231. Mg(2+) is bound at residue Asp231. Residues 338–346 (VQGRLDGFF) are interaction with PCNA.

This sequence belongs to the XPG/RAD2 endonuclease family. FEN1 subfamily. As to quaternary structure, interacts with PCNA. Three molecules of FEN1 bind to one PCNA trimer with each molecule binding to one PCNA monomer. PCNA stimulates the nuclease activity without altering cleavage specificity. The cofactor is Mg(2+). Phosphorylated. Phosphorylation upon DNA damage induces relocalization to the nuclear plasma.

It is found in the nucleus. The protein localises to the nucleolus. The protein resides in the nucleoplasm. It localises to the mitochondrion. Functionally, structure-specific nuclease with 5'-flap endonuclease and 5'-3' exonuclease activities involved in DNA replication and repair. During DNA replication, cleaves the 5'-overhanging flap structure that is generated by displacement synthesis when DNA polymerase encounters the 5'-end of a downstream Okazaki fragment. It enters the flap from the 5'-end and then tracks to cleave the flap base, leaving a nick for ligation. Also involved in the long patch base excision repair (LP-BER) pathway, by cleaving within the apurinic/apyrimidinic (AP) site-terminated flap. Acts as a genome stabilization factor that prevents flaps from equilibrating into structures that lead to duplications and deletions. Also possesses 5'-3' exonuclease activity on nicked or gapped double-stranded DNA, and exhibits RNase H activity. Also involved in replication and repair of rDNA and in repairing mitochondrial DNA. The sequence is that of Flap endonuclease 1 from Vanderwaltozyma polyspora (strain ATCC 22028 / DSM 70294 / BCRC 21397 / CBS 2163 / NBRC 10782 / NRRL Y-8283 / UCD 57-17) (Kluyveromyces polysporus).